We begin with the raw amino-acid sequence, 1023 residues long: 2-oxoglutarate dehydrogenase complex component E1 (1023 aa).

The transit peptide at 1 to 40 (MFHLRTCAAKLRPLTASQTVKTFSQNRPAAARTFQQIRCY) directs the protein to the mitochondrion. K74 carries the N6-succinyllysine modification. S100 carries the phosphoserine modification. Ca(2+) contacts are provided by H143, D156, and D158. Position 312 (R312) interacts with thiamine diphosphate. N6-acetyllysine is present on K401. Positions 411, 444, and 446 each coordinate thiamine diphosphate. Mg(2+)-binding residues include D411, N444, and I446. A Glycyl lysine isopeptide (Lys-Gly) (interchain with G-Cter in ubiquitin) cross-link involves residue K534. Residue K564 is modified to N6-succinyllysine. Q676 lines the thiamine diphosphate pocket. Residue K970 is modified to N6-acetyllysine.

It belongs to the alpha-ketoglutarate dehydrogenase family. As to quaternary structure, homodimer. The 2-oxoglutarate dehydrogenase complex is composed of OGDH (2-oxoglutarate dehydrogenase; E1), DLST (dihydrolipoamide succinyltransferase; E2), DLD (dihydrolipoamide dehydrogenase; E3) and the assembly factor KGD4. It contains multiple copies of the three enzymatic components (E1, E2 and E3). In the nucleus, the 2-oxoglutarate dehydrogenase complex associates with KAT2A. Interacts with ABHD11; this interaction maintains the functional lipoylation of the 2-oxoglutarate dehydrogenase complex. The cofactor is thiamine diphosphate. Mg(2+) is required as a cofactor.

The protein resides in the mitochondrion. Its subcellular location is the nucleus. It catalyses the reaction N(6)-[(R)-lipoyl]-L-lysyl-[protein] + 2-oxoglutarate + H(+) = N(6)-[(R)-S(8)-succinyldihydrolipoyl]-L-lysyl-[protein] + CO2. Calcium ions and ADP stimulate, whereas ATP and NADH reduce catalytic activity. 2-oxoglutarate dehydrogenase (E1o) component of the 2-oxoglutarate dehydrogenase complex (OGDHC). Participates in the first step, rate limiting for the overall conversion of 2-oxoglutarate to succinyl-CoA and CO(2) catalyzed by the whole OGDHC. Catalyzes the irreversible decarboxylation of 2-oxoglutarate (alpha-ketoglutarate) via the thiamine diphosphate (ThDP) cofactor and subsequent transfer of the decarboxylated acyl intermediate on an oxidized dihydrolipoyl group that is covalently amidated to the E2 enzyme (dihydrolipoyllysine-residue succinyltransferase or DLST). Plays a key role in the Krebs (citric acid) cycle, which is a common pathway for oxidation of fuel molecules, including carbohydrates, fatty acids, and amino acids. Can catalyze the decarboxylation of 2-oxoadipate in vitro, but at a much lower rate than 2-oxoglutarate. Mainly active in the mitochondrion. A fraction of the 2-oxoglutarate dehydrogenase complex also localizes in the nucleus and is required for lysine succinylation of histones: associates with KAT2A on chromatin and provides succinyl-CoA to histone succinyltransferase KAT2A. In Pongo abelii (Sumatran orangutan), this protein is 2-oxoglutarate dehydrogenase complex component E1.